The primary structure comprises 185 residues: Photosystem I assembly protein Ycf4 (185 aa).

A run of 2 helical transmembrane segments spans residues 21-43 (NFFW…ISSY) and 63-85 (GVVM…CTIL).

It belongs to the Ycf4 family.

The protein localises to the plastid. The protein resides in the chloroplast thylakoid membrane. Its function is as follows. Seems to be required for the assembly of the photosystem I complex. The polypeptide is Photosystem I assembly protein Ycf4 (Aegilops crassa (Persian goatgrass)).